We begin with the raw amino-acid sequence, 164 residues long: FMN reductase (NADH) RutF (164 aa).

The protein belongs to the non-flavoprotein flavin reductase family. RutF subfamily.

It carries out the reaction FMNH2 + NAD(+) = FMN + NADH + 2 H(+). In terms of biological role, catalyzes the reduction of FMN to FMNH2 which is used to reduce pyrimidine by RutA via the Rut pathway. This chain is FMN reductase (NADH) RutF, found in Escherichia coli O6:K15:H31 (strain 536 / UPEC).